Here is a 193-residue protein sequence, read N- to C-terminus: MSTMLIAVILLTLLALFFGVLLGFAALKFKVEGNPIVDELEAILPQTQCGQCGYPGCRPYAEAIANGDKVNKCPPGGTATMEKLASLMGVEPEPLNAEAQSQVKKVAYIREDECIGCTKCIQACPVDAIIGAGKLMHTVLTADCTGCDLCVEPCPVDCIDMVPVTQNLKNWNWRLNAIPVTLIQETPHEEKRG.

Positions 1–26 (MSTMLIAVILLTLLALFFGVLLGFAA) are hydrophobic. A 4Fe-4S domain is found at 32 to 90 (EGNPIVDELEAILPQTQCGQCGYPGCRPYAEAIANGDKVNKCPPGGTATMEKLASLMGV). Residues Cys-49, Cys-52, Cys-57, Cys-73, Cys-114, Cys-117, Cys-120, Cys-124, Cys-144, Cys-147, Cys-150, and Cys-154 each contribute to the [4Fe-4S] cluster site. 4Fe-4S ferredoxin-type domains follow at residues 105-134 (KVAYIREDECIGCTKCIQACPVDAIIGAGK) and 136-164 (MHTVLTADCTGCDLCVEPCPVDCIDMVPV).

It belongs to the 4Fe4S bacterial-type ferredoxin family. RnfB subfamily. As to quaternary structure, the complex is composed of six subunits: RnfA, RnfB, RnfC, RnfD, RnfE and RnfG. The cofactor is [4Fe-4S] cluster.

The protein resides in the cell inner membrane. Its function is as follows. Part of a membrane-bound complex that couples electron transfer with translocation of ions across the membrane. The chain is Ion-translocating oxidoreductase complex subunit B from Shewanella oneidensis (strain ATCC 700550 / JCM 31522 / CIP 106686 / LMG 19005 / NCIMB 14063 / MR-1).